Consider the following 305-residue polypeptide: tRNA pseudouridine synthase B (305 aa).

The active-site Nucleophile is aspartate 39.

Belongs to the pseudouridine synthase TruB family. Type 1 subfamily.

The enzyme catalyses uridine(55) in tRNA = pseudouridine(55) in tRNA. Functionally, responsible for synthesis of pseudouridine from uracil-55 in the psi GC loop of transfer RNAs. In Staphylococcus epidermidis (strain ATCC 35984 / DSM 28319 / BCRC 17069 / CCUG 31568 / BM 3577 / RP62A), this protein is tRNA pseudouridine synthase B.